The chain runs to 262 residues: Adenosylcobinamide-GDP ribazoletransferase (262 aa).

4 helical membrane passes run 43-63 (PLAGILIALPAAVTAVLLGAI), 121-141 (VALILSFGIRVSALAAFLPLL), 145-165 (GGGVALLATAALSRAAMVWHW), and 195-215 (GVILALVLFFLSGIPTVAVLL).

The protein belongs to the CobS family. Requires Mg(2+) as cofactor.

Its subcellular location is the cell inner membrane. The enzyme catalyses alpha-ribazole + adenosylcob(III)inamide-GDP = adenosylcob(III)alamin + GMP + H(+). The catalysed reaction is alpha-ribazole 5'-phosphate + adenosylcob(III)inamide-GDP = adenosylcob(III)alamin 5'-phosphate + GMP + H(+). The protein operates within cofactor biosynthesis; adenosylcobalamin biosynthesis; adenosylcobalamin from cob(II)yrinate a,c-diamide: step 7/7. Its function is as follows. Joins adenosylcobinamide-GDP and alpha-ribazole to generate adenosylcobalamin (Ado-cobalamin). Also synthesizes adenosylcobalamin 5'-phosphate from adenosylcobinamide-GDP and alpha-ribazole 5'-phosphate. This is Adenosylcobinamide-GDP ribazoletransferase from Sinorhizobium medicae (strain WSM419) (Ensifer medicae).